The chain runs to 1420 residues: DNA-directed RNA polymerase subunit beta' (1420 aa).

Positions 70, 72, 85, and 88 each coordinate Zn(2+). The Mg(2+) site is built by Asp-464, Asp-466, and Asp-468. Cys-823, Cys-897, Cys-904, and Cys-907 together coordinate Zn(2+).

Belongs to the RNA polymerase beta' chain family. In terms of assembly, the RNAP catalytic core consists of 2 alpha, 1 beta, 1 beta' and 1 omega subunit. When a sigma factor is associated with the core the holoenzyme is formed, which can initiate transcription. The cofactor is Mg(2+). Zn(2+) is required as a cofactor.

It catalyses the reaction RNA(n) + a ribonucleoside 5'-triphosphate = RNA(n+1) + diphosphate. DNA-dependent RNA polymerase catalyzes the transcription of DNA into RNA using the four ribonucleoside triphosphates as substrates. This chain is DNA-directed RNA polymerase subunit beta', found in Polynucleobacter necessarius subsp. necessarius (strain STIR1).